The chain runs to 431 residues: 23S rRNA (uracil(1939)-C(5))-methyltransferase RlmD (431 aa).

Residues 8–68 enclose the TRAM domain; it reads KRRVTTRQII…SKYSRGQVKR (61 aa). C81, C87, C90, and C162 together coordinate [4Fe-4S] cluster. S-adenosyl-L-methionine is bound by residues Q265, F294, N299, E315, N342, and D363. C389 acts as the Nucleophile in catalysis.

This sequence belongs to the class I-like SAM-binding methyltransferase superfamily. RNA M5U methyltransferase family. RlmD subfamily.

The enzyme catalyses uridine(1939) in 23S rRNA + S-adenosyl-L-methionine = 5-methyluridine(1939) in 23S rRNA + S-adenosyl-L-homocysteine + H(+). Catalyzes the formation of 5-methyl-uridine at position 1939 (m5U1939) in 23S rRNA. The polypeptide is 23S rRNA (uracil(1939)-C(5))-methyltransferase RlmD (Enterobacter sp. (strain 638)).